A 297-amino-acid polypeptide reads, in one-letter code: ClpXP adapter protein SpxH (297 aa).

This sequence belongs to the SpxH family. Interacts with Spx.

The protein resides in the cytoplasm. Functionally, adapter protein required for efficient degradation of Spx by ClpXP under non-stress conditions. Interaction with Spx stabilizes Spx and exposes the C-terminus of Spx for recognition and proteolysis by ClpXP. The chain is ClpXP adapter protein SpxH from Bacillus thuringiensis subsp. konkukian (strain 97-27).